A 398-amino-acid chain; its full sequence is Succinate--CoA ligase [ADP-forming] subunit beta (398 aa).

Residues 9-253 enclose the ATP-grasp domain; it reads MALLNERGVS…AGASDPLEQE (245 aa). Residues K46, 53–55, V111, and E116 each bind ATP; that span reads GRG. Residues N208 and D222 each coordinate Mg(2+). Residues N273 and 330–332 each bind substrate; that span reads GIM.

It belongs to the succinate/malate CoA ligase beta subunit family. As to quaternary structure, heterotetramer of two alpha and two beta subunits. Mg(2+) is required as a cofactor.

The catalysed reaction is succinate + ATP + CoA = succinyl-CoA + ADP + phosphate. It catalyses the reaction GTP + succinate + CoA = succinyl-CoA + GDP + phosphate. It participates in carbohydrate metabolism; tricarboxylic acid cycle; succinate from succinyl-CoA (ligase route): step 1/1. In terms of biological role, succinyl-CoA synthetase functions in the citric acid cycle (TCA), coupling the hydrolysis of succinyl-CoA to the synthesis of either ATP or GTP and thus represents the only step of substrate-level phosphorylation in the TCA. The beta subunit provides nucleotide specificity of the enzyme and binds the substrate succinate, while the binding sites for coenzyme A and phosphate are found in the alpha subunit. This is Succinate--CoA ligase [ADP-forming] subunit beta from Zymomonas mobilis subsp. mobilis (strain ATCC 31821 / ZM4 / CP4).